A 579-amino-acid polypeptide reads, in one-letter code: Zinc metalloproteinase nas-11 (579 aa).

The signal sequence occupies residues 1 to 17; the sequence is MTPSLVFLIVVIVVVEG. Residues 18-328 constitute a propeptide that is removed on maturation; it reads QGWRPWDRFN…AAPGSSRLKK (311 aa). Residues 35–58 are disordered; the sequence is WGGNNWGTRQRNQEPHDIPPPVPP. N-linked (GlcNAc...) asparagine glycosylation occurs at asparagine 256. The segment covering 293 to 312 has biased composition (acidic residues); that stretch reads GDDEIPLPDADTDDEDDDDS. Positions 293 to 323 are disordered; the sequence is GDDEIPLPDADTDDEDDDDSTNSASGAAPGS. Residues 329–536 enclose the Peptidase M12A domain; that stretch reads SALYFEGNLI…IELLKKMYCQ (208 aa). Intrachain disulfides connect cysteine 375–cysteine 535, cysteine 401–cysteine 421, cysteine 539–cysteine 575, cysteine 546–cysteine 568, and cysteine 555–cysteine 572. Histidine 430 contributes to the Zn(2+) binding site. Residue glutamate 431 is part of the active site. Residues histidine 434 and histidine 440 each coordinate Zn(2+). The N-linked (GlcNAc...) asparagine glycan is linked to asparagine 454. A ShKT domain is found at 539-575; it reads CDDKNVYCGAWALKDLCKNPGHDQYMAANCKKSCGLC.

It depends on Zn(2+) as a cofactor. As to expression, expressed in the anterior part of the intestine, CEP neurons and to a lesser extent in hypodermis.

It localises to the secreted. Its function is as follows. Metalloprotease. The protein is Zinc metalloproteinase nas-11 (nas-11) of Caenorhabditis elegans.